We begin with the raw amino-acid sequence, 250 residues long: 4-hydroxy-tetrahydrodipicolinate reductase (250 aa).

Residues 9-14 (GATGKM), 79-81 (GTT), and 103-106 (SANM) contribute to the NAD(+) site. H135 (proton donor/acceptor) is an active-site residue. (S)-2,3,4,5-tetrahydrodipicolinate is bound at residue H136. The active-site Proton donor is K139. Residue 145 to 146 (GT) coordinates (S)-2,3,4,5-tetrahydrodipicolinate.

It belongs to the DapB family.

Its subcellular location is the cytoplasm. It carries out the reaction (S)-2,3,4,5-tetrahydrodipicolinate + NAD(+) + H2O = (2S,4S)-4-hydroxy-2,3,4,5-tetrahydrodipicolinate + NADH + H(+). It catalyses the reaction (S)-2,3,4,5-tetrahydrodipicolinate + NADP(+) + H2O = (2S,4S)-4-hydroxy-2,3,4,5-tetrahydrodipicolinate + NADPH + H(+). It functions in the pathway amino-acid biosynthesis; L-lysine biosynthesis via DAP pathway; (S)-tetrahydrodipicolinate from L-aspartate: step 4/4. In terms of biological role, catalyzes the conversion of 4-hydroxy-tetrahydrodipicolinate (HTPA) to tetrahydrodipicolinate. This Rickettsia bellii (strain OSU 85-389) protein is 4-hydroxy-tetrahydrodipicolinate reductase.